Reading from the N-terminus, the 361-residue chain is Caffeic acid 3-O-methyltransferase 2 (361 aa).

A substrate-binding site is contributed by 128 to 134; the sequence is MNQDKVL. Residues 160-178 are substrate binding; the sequence is AFEYHGTDPRFNKVFNQGM. S-adenosyl-L-methionine is bound by residues Gly-206, Asp-229, Asp-249, Met-250, and Lys-263. The Proton acceptor role is filled by His-267.

The protein belongs to the class I-like SAM-binding methyltransferase superfamily. Cation-independent O-methyltransferase family. COMT subfamily. Homodimer.

It catalyses the reaction (E)-caffeate + S-adenosyl-L-methionine = (E)-ferulate + S-adenosyl-L-homocysteine + H(+). It functions in the pathway aromatic compound metabolism; phenylpropanoid biosynthesis. In terms of biological role, catalyzes the conversion of caffeic acid to ferulic acid and of 5-hydroxyferulic acid to sinapic acid. The resulting products may subsequently be converted to the corresponding alcohols that are incorporated into lignins. This Ocimum basilicum (Sweet basil) protein is Caffeic acid 3-O-methyltransferase 2 (COMT2).